The chain runs to 238 residues: Uridylate kinase (238 aa).

Position 12 to 15 (12 to 15) interacts with ATP; it reads KLSG. UMP is bound at residue glycine 54. Positions 55 and 59 each coordinate ATP. UMP is bound by residues aspartate 74 and 135-142; that span reads TGNPYFST. Tyrosine 168 and aspartate 171 together coordinate ATP.

Belongs to the UMP kinase family. In terms of assembly, homohexamer.

It localises to the cytoplasm. It carries out the reaction UMP + ATP = UDP + ADP. It participates in pyrimidine metabolism; CTP biosynthesis via de novo pathway; UDP from UMP (UMPK route): step 1/1. With respect to regulation, inhibited by UTP. Its function is as follows. Catalyzes the reversible phosphorylation of UMP to UDP. The polypeptide is Uridylate kinase (Syntrophomonas wolfei subsp. wolfei (strain DSM 2245B / Goettingen)).